Here is a 308-residue protein sequence, read N- to C-terminus: Lipoyl synthase (308 aa).

Positions 48, 53, 59, 74, 78, 81, and 287 each coordinate [4Fe-4S] cluster. Positions 60–277 (WSRHTATYLA…RSVGEALGLF (218 aa)) constitute a Radical SAM core domain.

Belongs to the radical SAM superfamily. Lipoyl synthase family. [4Fe-4S] cluster is required as a cofactor.

It localises to the cytoplasm. It carries out the reaction [[Fe-S] cluster scaffold protein carrying a second [4Fe-4S](2+) cluster] + N(6)-octanoyl-L-lysyl-[protein] + 2 oxidized [2Fe-2S]-[ferredoxin] + 2 S-adenosyl-L-methionine + 4 H(+) = [[Fe-S] cluster scaffold protein] + N(6)-[(R)-dihydrolipoyl]-L-lysyl-[protein] + 4 Fe(3+) + 2 hydrogen sulfide + 2 5'-deoxyadenosine + 2 L-methionine + 2 reduced [2Fe-2S]-[ferredoxin]. It functions in the pathway protein modification; protein lipoylation via endogenous pathway; protein N(6)-(lipoyl)lysine from octanoyl-[acyl-carrier-protein]: step 2/2. Functionally, catalyzes the radical-mediated insertion of two sulfur atoms into the C-6 and C-8 positions of the octanoyl moiety bound to the lipoyl domains of lipoate-dependent enzymes, thereby converting the octanoylated domains into lipoylated derivatives. This Chlamydia muridarum (strain MoPn / Nigg) protein is Lipoyl synthase.